Reading from the N-terminus, the 117-residue chain is UPF0344 protein GTNG_0604 (117 aa).

The next 4 membrane-spanning stretches (helical) occupy residues 1-21, 39-59, 61-81, and 97-117; these read MTHAHITSWFIMIILFLIAVS, LFYIITIITGLLLLHSIASIS, LYWLKALAGLWVIGAMEMVLV, and VIALVVTLFLGLLLPLGFDLF.

Belongs to the UPF0344 family.

It is found in the cell membrane. This Geobacillus thermodenitrificans (strain NG80-2) protein is UPF0344 protein GTNG_0604.